We begin with the raw amino-acid sequence, 193 residues long: Potassium-transporting ATPase KdpC subunit (193 aa).

The chain crosses the membrane as a helical span at residues 7 to 27 (PLVVIFVVLTAVTGLAYPAVM).

This sequence belongs to the KdpC family. In terms of assembly, the system is composed of three essential subunits: KdpA, KdpB and KdpC.

It localises to the cell inner membrane. Its function is as follows. Part of the high-affinity ATP-driven potassium transport (or Kdp) system, which catalyzes the hydrolysis of ATP coupled with the electrogenic transport of potassium into the cytoplasm. This subunit acts as a catalytic chaperone that increases the ATP-binding affinity of the ATP-hydrolyzing subunit KdpB by the formation of a transient KdpB/KdpC/ATP ternary complex. The polypeptide is Potassium-transporting ATPase KdpC subunit (Burkholderia ambifaria (strain ATCC BAA-244 / DSM 16087 / CCUG 44356 / LMG 19182 / AMMD) (Burkholderia cepacia (strain AMMD))).